The chain runs to 347 residues: Probable ribonucleotide transport ATP-binding protein mkl (347 aa).

Residues 16 to 252 (IEVKGLTKSF…DEPVVRQFLN (237 aa)) form the ABC transporter domain. 48-55 (GPSGTGKS) is an ATP binding site.

It belongs to the ABC transporter superfamily.

Not known, could be involved in the transport of ribonucleotides. This is Probable ribonucleotide transport ATP-binding protein mkl (mkl) from Mycobacterium leprae (strain TN).